Here is a 283-residue protein sequence, read N- to C-terminus: uncharacterized protein (283 aa).

The HTH rpiR-type domain occupies 3 to 79; the sequence is TGGLAIIQSM…MRVAGDLAKP (77 aa). Positions 39 to 58 form a DNA-binding region, H-T-H motif; the sequence is VNEISALANSSDAAVIRLCK. Residues 123-264 form the SIS domain; sequence AVSLLLKAHT…FLGMAAEQYE (142 aa).

This is an uncharacterized protein from Bacillus subtilis (strain 168).